We begin with the raw amino-acid sequence, 419 residues long: L-rhamnose isomerase (419 aa).

Positions 262, 294, and 296 each coordinate Mn(2+).

This sequence belongs to the rhamnose isomerase family. As to quaternary structure, homotetramer. Mn(2+) serves as cofactor.

The protein resides in the cytoplasm. It catalyses the reaction L-rhamnopyranose = L-rhamnulose. Its pathway is carbohydrate degradation; L-rhamnose degradation; glycerone phosphate from L-rhamnose: step 1/3. Functionally, catalyzes the interconversion of L-rhamnose and L-rhamnulose. The protein is L-rhamnose isomerase of Salmonella choleraesuis (strain SC-B67).